The primary structure comprises 507 residues: Dolichyl pyrophosphate Man9GlcNAc2 alpha-1,3-glucosyltransferase (507 aa).

At 1 to 2 the chain is on the cytoplasmic side; the sequence is ME. A helical transmembrane segment spans residues 3–23; it reads SWPWMAVVVLLGLTVRWTVSL. The Lumenal portion of the chain corresponds to 24-114; that stretch reads SSYSGAGKPP…SQAHKLFMRA (91 aa). Asn59 carries N-linked (GlcNAc...) asparagine glycosylation. A helical transmembrane segment spans residues 115–135; it reads TVLAADLLIYVPAVLLYCYSL. Topologically, residues 136 to 143 are cytoplasmic; sequence KEISPKRK. Residues 144–164 traverse the membrane as a helical segment; it reads IASALCILLYPGLILIDYGHF. Over 165 to 172 the chain is Lumenal; the sequence is QYNSVSLG. Residues 173-193 traverse the membrane as a helical segment; it reads FALWGVLGVSWDWDLLGSLAF. At 194-229 the chain is on the cytoplasmic side; it reads CLALNYKQMELYHSLPFFCFLLGKCFKKGLKGKGLA. A helical membrane pass occupies residues 230–250; it reads LFIRIACTVLASFLLCWLPFL. Topologically, residues 251 to 297 are lumenal; the sequence is TEREHALQVVRRLFPVDRGLFEDKVANIWCSVNVFLKIKDTLPRHIQ. Residues 298 to 318 form a helical membrane-spanning segment; the sequence is IAISFCFTLLSLLPACIKLTV. Residues 319–332 lie on the Cytoplasmic side of the membrane; it reads RPSCKGFRFTLVSC. The helical transmembrane segment at 333 to 353 threads the bilayer; that stretch reads ALSFFLFSFQVHEKSILLVSL. Over 354-361 the chain is Lumenal; the sequence is PVCLVLTE. Residues 362 to 382 form a helical membrane-spanning segment; it reads IPFMSTWFLLVSTFSMLPLLL. Over 383 to 385 the chain is Cytoplasmic; it reads KDE. Residues 386 to 406 traverse the membrane as a helical segment; that stretch reads LLLPSVVTVMAFVIACGTFFP. The Lumenal portion of the chain corresponds to 407–437; that stretch reads MLENTSEEQLQLKSFAVSVRRHLPGFTFLPR. A helical transmembrane segment spans residues 438 to 458; it reads IMQCLFLSSVITMVLLTILSV. The Cytoplasmic segment spans residues 459-468; it reads TLDPPQKLPD. Residues 469–489 traverse the membrane as a helical segment; sequence LFPVLICFVSCVNFVFFLVYF. Over 490-507 the chain is Lumenal; sequence NIVIMWDSKNGRNRKKIE.

The protein belongs to the ALG6/ALG8 glucosyltransferase family.

The protein localises to the endoplasmic reticulum membrane. It carries out the reaction an alpha-D-Man-(1-&gt;2)-alpha-D-Man-(1-&gt;2)-alpha-D-Man-(1-&gt;3)-[alpha-D-Man-(1-&gt;2)-alpha-D-Man-(1-&gt;3)-[alpha-D-Man-(1-&gt;2)-alpha-D-Man-(1-&gt;6)]-alpha-D-Man-(1-&gt;6)]-beta-D-Man-(1-&gt;4)-beta-D-GlcNAc-(1-&gt;4)-alpha-D-GlcNAc-diphospho-di-trans,poly-cis-dolichol + a di-trans,poly-cis-dolichyl beta-D-glucosyl phosphate = an alpha-D-Glc-(1-&gt;3)-alpha-D-Man-(1-&gt;2)-alpha-D-Man-(1-&gt;2)-alpha-D-Man-(1-&gt;3)-[alpha-D-Man-(1-&gt;2)-alpha-D-Man-(1-&gt;3)-[alpha-D-Man-(1-&gt;2)-alpha-D-Man-(1-&gt;6)]-alpha-D-Man-(1-&gt;6)]-beta-D-Man-(1-&gt;4)-beta-D-GlcNAc-(1-&gt;4)-alpha-D-GlcNAc-diphospho-di-trans,poly-cis-dolichol + a di-trans,poly-cis-dolichyl phosphate + H(+). The protein operates within protein modification; protein glycosylation. Functionally, dolichyl pyrophosphate Man9GlcNAc2 alpha-1,3-glucosyltransferase that operates in the biosynthetic pathway of dolichol-linked oligosaccharides, the glycan precursors employed in protein asparagine (N)-glycosylation. The assembly of dolichol-linked oligosaccharides begins on the cytosolic side of the endoplasmic reticulum membrane and finishes in its lumen. The sequential addition of sugars to dolichol pyrophosphate produces dolichol-linked oligosaccharides containing fourteen sugars, including two GlcNAcs, nine mannoses and three glucoses. Once assembled, the oligosaccharide is transferred from the lipid to nascent proteins by oligosaccharyltransferases. In the lumen of the endoplasmic reticulum, adds the first glucose residue from dolichyl phosphate glucose (Dol-P-Glc) onto the lipid-linked oligosaccharide intermediate Man(9)GlcNAc(2)-PP-Dol to produce Glc(1)Man(9)GlcNAc(2)-PP-Dol. Glc(1)Man(9)GlcNAc(2)-PP-Dol is a substrate for ALG8, the following enzyme in the biosynthetic pathway. In Mus musculus (Mouse), this protein is Dolichyl pyrophosphate Man9GlcNAc2 alpha-1,3-glucosyltransferase.